The chain runs to 864 residues: MDTCTRLLFAACATLSILHLVQSQNQQGFISLDCGLASNESPYNEANSNLTYISDADFIQGGKTGNVQKDLLMKLRKPYTVLRYFPDGIRNCYSLNVKQDTNYLIRVMFRYGNYDGLNNSPRFDLYLGPNIWTTIDMGKSGDGVLEEIIHITRSNILDICLVKTGTSTPMISSIELRPLLYDTYIAQTGSLRNYNRFYFTDSNNYIRYPQDVHDRIWVPLILPEWTHINTSHHVIDSIDGYDPPQDVLRTGAMPANASDPMTITWNLKTATDQVYGYIYIAEIMEVQANETREFEVVVNNKVHFDPFRPTRFEAQVMFNNVPLTCEGGFCRLQLIKTPKSTLPPLMNAFEIFTGIEFPQSETNQNDVIAVKNIQASYGLNRISWQGDPCVPKQFLWTGLSCNVIDVSTPPRIVKLDLSSSGLNGVIPPSIQNLTQLQELDLSQNNLTGKVPEFLAKMKYLLVINLSGNKLSGLVPQALLDRKKEGLKLLVDENMICVSCGTRFPTAAVAASVSAVAIIILVLVLIFVLRRRKPSAGKVTRSSFKSENRRFTYSDVNKMTNNFQVVIGKGGFGVVYQGCLNNEQAAIKVLSHSSAQGYKEFKTEVELLLRVHHEKLVSLIGYCDDDNGLALIYELMGKGNLKEHLSGKPGCSVLSWPIRLKIALESAIGIEYLHTGCKPKIVHRDVKSTNILLSEEFEAKIADFGLSRSFLIGNEAQPTVVAGTFGYLDPEYHKTSLLSMKSDVYSFGVVLLEIISGQDVIDLSRENCNIVEWTSFILENGDIESIVDPNLHQDYDTSSAWKVVELAMSCVNRTSKERPNMSQVVHVLNECLETCEKWRKSQEVDLSSPLELSIVVDTEINPKAR.

An N-terminal signal peptide occupies residues 1-23 (MDTCTRLLFAACATLSILHLVQS). Residues 24-507 (QNQQGFISLD…SCGTRFPTAA (484 aa)) lie on the Extracellular side of the membrane. N-linked (GlcNAc...) asparagine glycosylation is found at Asn-49, Asn-229, Asn-256, Asn-289, Asn-432, Asn-445, and Asn-464. 3 LRR repeats span residues 411–434 (RIVK…QNLT), 435–457 (QLQE…LAKM), and 459–480 (YLLV…ALLD). A helical transmembrane segment spans residues 508-528 (VAASVSAVAIIILVLVLIFVL). Residues 529 to 864 (RRRKPSAGKV…VDTEINPKAR (336 aa)) lie on the Cytoplasmic side of the membrane. Thr-551 carries the phosphothreonine modification. One can recognise a Protein kinase domain in the interval 560 to 831 (NNFQVVIGKG…QVVHVLNECL (272 aa)). ATP-binding positions include 566-574 (IGKGGFGVV) and Lys-587. Tyr-632 carries the post-translational modification Phosphotyrosine. Asp-684 functions as the Proton acceptor in the catalytic mechanism. Residues Thr-718 and Thr-723 each carry the phosphothreonine modification. Tyr-731 is modified (phosphotyrosine).

Belongs to the protein kinase superfamily. Ser/Thr protein kinase family.

Its subcellular location is the membrane. The catalysed reaction is L-seryl-[protein] + ATP = O-phospho-L-seryl-[protein] + ADP + H(+). The enzyme catalyses L-threonyl-[protein] + ATP = O-phospho-L-threonyl-[protein] + ADP + H(+). This chain is Probable LRR receptor-like serine/threonine-protein kinase At1g07550, found in Arabidopsis thaliana (Mouse-ear cress).